A 470-amino-acid polypeptide reads, in one-letter code: ATP synthase subunit beta (470 aa).

An ATP-binding site is contributed by 148-155; the sequence is GGAGVGKT.

The protein belongs to the ATPase alpha/beta chains family. F-type ATPases have 2 components, CF(1) - the catalytic core - and CF(0) - the membrane proton channel. CF(1) has five subunits: alpha(3), beta(3), gamma(1), delta(1), epsilon(1). CF(0) has three main subunits: a(1), b(2) and c(9-12). The alpha and beta chains form an alternating ring which encloses part of the gamma chain. CF(1) is attached to CF(0) by a central stalk formed by the gamma and epsilon chains, while a peripheral stalk is formed by the delta and b chains.

The protein resides in the cell inner membrane. It carries out the reaction ATP + H2O + 4 H(+)(in) = ADP + phosphate + 5 H(+)(out). Its function is as follows. Produces ATP from ADP in the presence of a proton gradient across the membrane. The catalytic sites are hosted primarily by the beta subunits. The chain is ATP synthase subunit beta from Teredinibacter turnerae (strain ATCC 39867 / T7901).